A 336-amino-acid polypeptide reads, in one-letter code: Atypical chemokine receptor 1 (336 aa).

Over 1–63 (MGNCLHQAEL…CNLLDDSSLP (63 aa)) the chain is Extracellular. N-linked (GlcNAc...) asparagine glycosylation is found at Asn-16 and Asn-33. Disulfide bonds link Cys-51/Cys-276 and Cys-129/Cys-195. A helical transmembrane segment spans residues 64 to 84 (FFILASVLGILASSTVLFMLF). At 85–95 (RPLFRWQLCPG) the chain is on the cytoplasmic side. The helical transmembrane segment at 96–116 (WPVLAQLAVGSALFSIVVPIL) threads the bilayer. Topologically, residues 117-129 (APGLGNTRSSALC) are extracellular. The chain crosses the membrane as a helical span at residues 130 to 153 (SLGYCVWYGSAFAQALLLGCHASL). The Cytoplasmic segment spans residues 154–166 (GPKLGAGQVPGLT). A helical membrane pass occupies residues 167 to 187 (LGLTVGLWGAAALLTVPITLA). The Extracellular segment spans residues 188-207 (SGASDGLCTPIYSTELKALQ). The helical transmembrane segment at 208-228 (ATHTVACFAIFVLLPLGLFGA) threads the bilayer. At 229 to 244 (KGVKKALGMGPGPWMT) the chain is on the cytoplasmic side. A helical transmembrane segment spans residues 245-265 (ILWIWFIFWWPHGVVLGLDFL). Topologically, residues 266–287 (VRSKLLLLPTCLAQQVLDLLLN) are extracellular. A helical transmembrane segment spans residues 288–308 (LAEALTIVHCVATPLLLALFC). Residues 309-336 (HQATRTLLPSLPLPERWSSPVDTLGSKS) lie on the Cytoplasmic side of the membrane.

The protein belongs to the G-protein coupled receptor 1 family. Atypical chemokine receptor subfamily.

Its subcellular location is the early endosome. The protein localises to the recycling endosome. It localises to the membrane. In terms of biological role, atypical chemokine receptor that controls chemokine levels and localization via high-affinity chemokine binding that is uncoupled from classic ligand-driven signal transduction cascades, resulting instead in chemokine sequestration, degradation, or transcytosis. Also known as interceptor (internalizing receptor) or chemokine-scavenging receptor or chemokine decoy receptor. Has a promiscuous chemokine-binding profile, interacting with inflammatory chemokines of both the CXC and the CC subfamilies but not with homeostatic chemokines. Acts as a receptor for chemokines including CCL2, CCL5, CCL7, CCL11, CCL13, CCL14, CCL17, CXCL5, CXCL6, IL8/CXCL8, CXCL11, GRO, RANTES, MCP-1 and TARC. May regulate chemokine bioavailability and, consequently, leukocyte recruitment through two distinct mechanisms: when expressed in endothelial cells, it sustains the abluminal to luminal transcytosis of tissue-derived chemokines and their subsequent presentation to circulating leukocytes; when expressed in erythrocytes, serves as blood reservoir of cognate chemokines but also as a chemokine sink, buffering potential surges in plasma chemokine levels. The protein is Atypical chemokine receptor 1 (ACKR1) of Sapajus apella (Brown-capped capuchin).